The chain runs to 252 residues: Adenosylcobinamide-GDP ribazoletransferase (252 aa).

Helical transmembrane passes span 4–24 (LFKGLMMSLSMFTIIPMPYVE), 38–58 (PIIGLIVGCVWFLGYKLINYL), 60–80 (ISIVLKSALIMIIPFIITGML), 113–133 (FSVISVIILFFIQFGAVHSFL), 141–161 (ILMFLPIISRNIVAYFFITII), 190–210 (LVCILFGSILGYIGIAILLIV), and 232–252 (VAGFSLVVGEIVGLFSACLFT).

Belongs to the CobS family. The cofactor is Mg(2+).

Its subcellular location is the cell membrane. The enzyme catalyses alpha-ribazole + adenosylcob(III)inamide-GDP = adenosylcob(III)alamin + GMP + H(+). It catalyses the reaction alpha-ribazole 5'-phosphate + adenosylcob(III)inamide-GDP = adenosylcob(III)alamin 5'-phosphate + GMP + H(+). It functions in the pathway cofactor biosynthesis; adenosylcobalamin biosynthesis; adenosylcobalamin from cob(II)yrinate a,c-diamide: step 7/7. Its function is as follows. Joins adenosylcobinamide-GDP and alpha-ribazole to generate adenosylcobalamin (Ado-cobalamin). Also synthesizes adenosylcobalamin 5'-phosphate from adenosylcobinamide-GDP and alpha-ribazole 5'-phosphate. This Clostridium botulinum (strain Alaska E43 / Type E3) protein is Adenosylcobinamide-GDP ribazoletransferase.